Here is a 406-residue protein sequence, read N- to C-terminus: Tyrosine--tRNA ligase (406 aa).

A 'HIGH' region motif is present at residues 51 to 60; that stretch reads PTAPDLHLGH. The 'KMSKS' region motif lies at 236–240; that stretch reads KMSKS. Lys239 contacts ATP. The S4 RNA-binding domain occupies 345 to 405; that stretch reads IWICKAMVEG…GKRKFLRLIV (61 aa).

Belongs to the class-I aminoacyl-tRNA synthetase family. TyrS type 2 subfamily. Homodimer.

The protein resides in the cytoplasm. The enzyme catalyses tRNA(Tyr) + L-tyrosine + ATP = L-tyrosyl-tRNA(Tyr) + AMP + diphosphate + H(+). Catalyzes the attachment of tyrosine to tRNA(Tyr) in a two-step reaction: tyrosine is first activated by ATP to form Tyr-AMP and then transferred to the acceptor end of tRNA(Tyr). The sequence is that of Tyrosine--tRNA ligase from Wolinella succinogenes (strain ATCC 29543 / DSM 1740 / CCUG 13145 / JCM 31913 / LMG 7466 / NCTC 11488 / FDC 602W) (Vibrio succinogenes).